A 292-amino-acid polypeptide reads, in one-letter code: L-serine dehydratase, alpha chain (292 aa).

This sequence belongs to the iron-sulfur dependent L-serine dehydratase family. In terms of assembly, heterooctamer of four alpha chains and four beta chains. It depends on [4Fe-4S] cluster as a cofactor.

It catalyses the reaction L-serine = pyruvate + NH4(+). It participates in carbohydrate biosynthesis; gluconeogenesis. The polypeptide is L-serine dehydratase, alpha chain (sdhA) (Peptoniphilus asaccharolyticus (Peptostreptococcus asaccharolyticus)).